A 416-amino-acid chain; its full sequence is Enolase (416 aa).

Gln-162 is a binding site for (2R)-2-phosphoglycerate. The active-site Proton donor is Glu-204. Asp-241, Glu-282, and Asp-309 together coordinate Mg(2+). 4 residues coordinate (2R)-2-phosphoglycerate: Lys-334, Arg-363, Ser-364, and Lys-385. Catalysis depends on Lys-334, which acts as the Proton acceptor.

Belongs to the enolase family. Mg(2+) serves as cofactor.

It is found in the cytoplasm. Its subcellular location is the secreted. The protein localises to the cell surface. It catalyses the reaction (2R)-2-phosphoglycerate = phosphoenolpyruvate + H2O. Its pathway is carbohydrate degradation; glycolysis; pyruvate from D-glyceraldehyde 3-phosphate: step 4/5. Its function is as follows. Catalyzes the reversible conversion of 2-phosphoglycerate (2-PG) into phosphoenolpyruvate (PEP). It is essential for the degradation of carbohydrates via glycolysis. The chain is Enolase from Campylobacter concisus (strain 13826).